The primary structure comprises 157 residues: Transcription elongation factor GreA (157 aa).

The protein belongs to the GreA/GreB family.

Necessary for efficient RNA polymerase transcription elongation past template-encoded arresting sites. The arresting sites in DNA have the property of trapping a certain fraction of elongating RNA polymerases that pass through, resulting in locked ternary complexes. Cleavage of the nascent transcript by cleavage factors such as GreA or GreB allows the resumption of elongation from the new 3'terminus. GreA releases sequences of 2 to 3 nucleotides. The sequence is that of Transcription elongation factor GreA from Hyphomonas neptunium (strain ATCC 15444).